The sequence spans 126 residues: Large ribosomal subunit protein bL12 (126 aa).

Positions 107–116 are enriched in basic and acidic residues; the sequence is EDAEKAKSQL. The tract at residues 107 to 126 is disordered; sequence EDAEKAKSQLEEAGATVELK.

The protein belongs to the bacterial ribosomal protein bL12 family. As to quaternary structure, homodimer. Part of the ribosomal stalk of the 50S ribosomal subunit. Forms a multimeric L10(L12)X complex, where L10 forms an elongated spine to which 2 to 4 L12 dimers bind in a sequential fashion. Binds GTP-bound translation factors.

Its function is as follows. Forms part of the ribosomal stalk which helps the ribosome interact with GTP-bound translation factors. Is thus essential for accurate translation. This chain is Large ribosomal subunit protein bL12, found in Bifidobacterium adolescentis (strain ATCC 15703 / DSM 20083 / NCTC 11814 / E194a).